Here is a 136-residue protein sequence, read N- to C-terminus: Large ribosomal subunit protein uL16 (136 aa).

It belongs to the universal ribosomal protein uL16 family. In terms of assembly, part of the 50S ribosomal subunit.

Functionally, binds 23S rRNA and is also seen to make contacts with the A and possibly P site tRNAs. This Rickettsia akari (strain Hartford) protein is Large ribosomal subunit protein uL16.